Here is a 134-residue protein sequence, read N- to C-terminus: RxLR effector protein Avh238 (134 aa).

Residues 1-21 (MRGVFFVAVAVAIFARSSAEA) form the signal peptide. The RxLR-dEER signature appears at 44–68 (RFLRVADSEDDDLAAPADDGKTEER). Residues 50-72 (DSEDDDLAAPADDGKTEERAPKF) form a disordered region. A compositionally biased stretch (basic and acidic residues) spans 61 to 70 (DDGKTEERAP).

It belongs to the RxLR effector family.

It localises to the secreted. Its subcellular location is the host cytoplasm. It is found in the host nucleus. Functionally, effector that, due to the lack of a histidine residue at position 79, is not able to induce cell death in tomato, tobacco, eggplant, potato, or in A.thaliana. This is RxLR effector protein Avh238 from Phytophthora sojae (Soybean stem and root rot agent).